A 594-amino-acid chain; its full sequence is MTETSANKPENTQAHEGRDYSVLERQFNVLRDKLRNVDRQLAAATQNNTKMTTTLQSAKAEILRLKSALEKDGQAPYSFATLVQINPRRTPGQAVSTLSAADQASSATGLAVTEESVDIAYQGRKMRVGLSPLVNIASLSPGQEVLLNESLTVIAGLGFERTGEIVSVKELIGTDRALVTGRADEERVVKLSGALMSQKIRVGDALSADSRSGYALEKVPRSEVENLILEEVPDISYHDIGGLGPQIEQIRDAVELPFLHPDLYREHGLKAPKGILLYGPPGCGKTLIAKAVANSLAARAAERNGLKETKSFFLNIKGPELLDKYVGETERKIRLIFARAREKASDGSAVVVFFDEMDSLFRTRGTGVSSDVETTIVPQLLSEIDGVERLDNVIVIGASNREDMIDPAILRPGRLDVKVKIQRPDAEAAADIFAKYVTVDLPLHQDDLLAHGNSAQATVDAMIQRTVEAMYSTDKSNEYLEVTYANGDSEMLYFKDFNSGAVIQNVVDRAKKYAIKDLLTTGDKGIRVDHMLRAVADEFREHEDMPNTTNPDDWARISDKKGERITYIRTIIQGKAGQEPGKTLETSLNTGQYL.

The segment covering 1 to 12 has biased composition (polar residues); it reads MTETSANKPENT. The tract at residues 1-20 is disordered; sequence MTETSANKPENTQAHEGRDY. Residues 18–71 adopt a coiled-coil conformation; that stretch reads RDYSVLERQFNVLRDKLRNVDRQLAAATQNNTKMTTTLQSAKAEILRLKSALEK. Residue 282 to 287 coordinates ATP; the sequence is GCGKTL. Residues 593-594 are docks into pockets in the proteasome alpha-ring; the sequence is YL.

It belongs to the AAA ATPase family. In terms of assembly, homohexamer. Assembles into a hexameric ring structure that caps the 20S proteasome core. Strongly interacts with the prokaryotic ubiquitin-like protein Pup through a hydrophobic interface; the interacting region of ARC lies in its N-terminal coiled-coil domain. There is one Pup binding site per ARC hexamer ring. Upon ATP-binding, the C-terminus of ARC interacts with the alpha-rings of the proteasome core, possibly by binding to the intersubunit pockets.

Its pathway is protein degradation; proteasomal Pup-dependent pathway. Its function is as follows. ATPase which is responsible for recognizing, binding, unfolding and translocation of pupylated proteins into the bacterial 20S proteasome core particle. May be essential for opening the gate of the 20S proteasome via an interaction with its C-terminus, thereby allowing substrate entry and access to the site of proteolysis. Thus, the C-termini of the proteasomal ATPase may function like a 'key in a lock' to induce gate opening and therefore regulate proteolysis. This Renibacterium salmoninarum (strain ATCC 33209 / DSM 20767 / JCM 11484 / NBRC 15589 / NCIMB 2235) protein is Proteasome-associated ATPase.